Here is a 537-residue protein sequence, read N- to C-terminus: Carbamoyl phosphate synthase large chain, C-terminal section (537 aa).

The carbamoyl phosphate synthetic domain stretch occupies residues 1-395 (MSKKVVILGS…AYYKAQLSAG (395 aa)). Residues 122-313 (RELIIELGLK…LAKIATKVAI (192 aa)) enclose the ATP-grasp domain. Residues R158, K197, L199, E204, G229, V230, H231, S232, Q272, and E284 each coordinate ATP. Residues Q272, E284, and N286 each contribute to the Mg(2+) site. 3 residues coordinate Mn(2+): Q272, E284, and N286. The MGS-like domain maps to 396 to 537 (YRLPEKGNLF…VHSLQEIYNI (142 aa)). Residues 396-537 (YRLPEKGNLF…VHSLQEIYNI (142 aa)) are allosteric domain.

Belongs to the CarB family. As to quaternary structure, composed of two chains; the small (or glutamine) chain promotes the hydrolysis of glutamine to ammonia, which is used by the large (or ammonia) chain to synthesize carbamoyl phosphate. Tetramer of heterodimers (alpha,beta)4. Mg(2+) serves as cofactor. The cofactor is Mn(2+).

It catalyses the reaction hydrogencarbonate + L-glutamine + 2 ATP + H2O = carbamoyl phosphate + L-glutamate + 2 ADP + phosphate + 2 H(+). It carries out the reaction hydrogencarbonate + NH4(+) + 2 ATP = carbamoyl phosphate + 2 ADP + phosphate + 2 H(+). The protein operates within amino-acid biosynthesis; L-arginine biosynthesis; carbamoyl phosphate from bicarbonate: step 1/1. It functions in the pathway pyrimidine metabolism; UMP biosynthesis via de novo pathway; (S)-dihydroorotate from bicarbonate: step 1/3. Its function is as follows. Large subunit of the glutamine-dependent carbamoyl phosphate synthetase (CPSase). CPSase catalyzes the formation of carbamoyl phosphate from the ammonia moiety of glutamine, carbonate, and phosphate donated by ATP, constituting the first step of 2 biosynthetic pathways, one leading to arginine and/or urea and the other to pyrimidine nucleotides. The large subunit (synthetase) binds the substrates ammonia (free or transferred from glutamine from the small subunit), hydrogencarbonate and ATP and carries out an ATP-coupled ligase reaction, activating hydrogencarbonate by forming carboxy phosphate which reacts with ammonia to form carbamoyl phosphate. The polypeptide is Carbamoyl phosphate synthase large chain, C-terminal section (carB2) (Aquifex aeolicus (strain VF5)).